The primary structure comprises 111 residues: Disintegrin CV-11-alpha (111 aa).

Residues 1–20 form the signal peptide; that stretch reads MIQVLLVIICLAVFPYQGSS. A propeptide spanning residues 21-46 is cleaved from the precursor; the sequence is IILESGNVNDFELVYPKKVTVLPTGA. The 65-residue stretch at 47 to 111 folds into the Disintegrin domain; it reads MNSAHPCCDP…SDCPRNPWKD (65 aa). 4 cysteine pairs are disulfide-bonded: C53-C76, C67-C73, C72-C97, and C85-C104. A Cell attachment site motif is present at residues 89–91; it reads KGD.

This sequence belongs to the disintegrin family. Dimeric disintegrin subfamily. Heterodimer with subunit beta; disulfide-linked. Expressed by the venom gland.

Its subcellular location is the secreted. Inhibits ADP-induced human platelet aggregation. Antagonist of alpha-IIb/beta-3 (ITGA2B/ITGB3). The protein is Disintegrin CV-11-alpha of Cerastes vipera (Sahara sand viper).